A 233-amino-acid chain; its full sequence is Phosphoglycolate phosphatase (233 aa).

Aspartate 13 acts as the Nucleophile in catalysis. Mg(2+) is bound by residues aspartate 13, aspartate 15, and aspartate 175.

It belongs to the HAD-like hydrolase superfamily. CbbY/CbbZ/Gph/YieH family. It depends on Mg(2+) as a cofactor.

The catalysed reaction is 2-phosphoglycolate + H2O = glycolate + phosphate. It participates in organic acid metabolism; glycolate biosynthesis; glycolate from 2-phosphoglycolate: step 1/1. In terms of biological role, specifically catalyzes the dephosphorylation of 2-phosphoglycolate. Is involved in the dissimilation of the intracellular 2-phosphoglycolate formed during the DNA repair of 3'-phosphoglycolate ends, a major class of DNA lesions induced by oxidative stress. The sequence is that of Phosphoglycolate phosphatase from Agrobacterium fabrum (strain C58 / ATCC 33970) (Agrobacterium tumefaciens (strain C58)).